A 678-amino-acid polypeptide reads, in one-letter code: Proprotein convertase subtilisin/kexin type 4 (678 aa).

Residues 1–26 (MRPSQTALWLGLVLSLALLAVGWASA) form the signal peptide. Positions 27–110 (RPPIYVSSWA…QQTLRRRVKR (84 aa)) are excised as a propeptide. The Peptidase S8 domain maps to 123–437 (QWYMNKEIEQ…YGLLDAGLLV (315 aa)). Residues Asp-155, His-196, and Ser-370 each act as charge relay system in the active site. Residues 446-580 (TKPQKKCTIR…TLLLYGTAED (135 aa)) form the P/Homo B domain. N-linked (GlcNAc...) asparagine glycosylation is present at Asn-472.

The protein belongs to the peptidase S8 family. Furin subfamily. The proPCSK4 form interacts with HSPA5; the interaction takes place at the endoplasmic reticulum. N-glycosylated. In terms of processing, synthesized in the endoplasmic reticulum as a zymogen, is matured by autocatalytic cleavage between the prodomain and the catalytic domain. As to expression, expressed abundantly in the testis. High levels seen in germ cells but not in Leydig, Sertoli or peritubular cells. Expressed in the pachytene spermatocytes and the round spermatids but not in the elongating spermatids. May be expressed within hormonally stimulated ovaries.

It localises to the cytoplasmic vesicle. The protein resides in the secretory vesicle. It is found in the acrosome membrane. Its function is as follows. Proprotein convertase involved in the processing of hormone and other protein precursors at sites comprised of pairs of basic amino acid residues. In males, important for ADAM2 processing as well as other acrosomal proteins with roles in fertilization and critical for normal fertilization events such as sperm capacitation, acrosome reaction and binding of sperm to zona pellucida. Plays also a role in female fertility, involved in the regulation of trophoblast migration and placental development, may be through the proteolytical processing and activation of proteins such as IGF2. May also participate in folliculogenesis in the ovaries. The protein is Proprotein convertase subtilisin/kexin type 4 (Pcsk4) of Rattus norvegicus (Rat).